Consider the following 587-residue polypeptide: Arginine--tRNA ligase (587 aa).

The 'HIGH' region motif lies at 126–136; that stretch reads ANPTGPLHVGH.

Belongs to the class-I aminoacyl-tRNA synthetase family. As to quaternary structure, monomer.

It is found in the cytoplasm. The enzyme catalyses tRNA(Arg) + L-arginine + ATP = L-arginyl-tRNA(Arg) + AMP + diphosphate. This Azoarcus sp. (strain BH72) protein is Arginine--tRNA ligase.